A 341-amino-acid polypeptide reads, in one-letter code: Mitochondrial dimethyladenosine transferase 1 (341 aa).

Residues 1–27 (MASSRTLGTFRLPPLPTIREIIKLFRL) constitute a mitochondrion transit peptide. Residues Leu38, Gly63, Glu85, Lys86, Asp111, Val112, and Asn141 each contribute to the S-adenosyl-L-methionine site.

The protein belongs to the class I-like SAM-binding methyltransferase superfamily. rRNA adenine N(6)-methyltransferase family. KsgA subfamily. Interacts with mitochondrial RNA polymerase POLRMT. Interacts with TFAM. Bound to the maturing mtSSU until the late stages of assembly.

Its subcellular location is the mitochondrion. It catalyses the reaction adenosine(N)/adenosine(N+1) in rRNA + 4 S-adenosyl-L-methionine = N(6)-dimethyladenosine(N)/N(6)-dimethyladenosine(N+1) in rRNA + 4 S-adenosyl-L-homocysteine + 4 H(+). Its function is as follows. Mitochondrial methyltransferase which uses S-adenosyl methionine to dimethylate two highly conserved adjacent adenosine residues (A1583 and A1584) within the loop of helix 45 at the 3-prime end of 12S rRNA, thereby regulating the assembly or stability of the small subunit of the mitochondrial ribosome. Also required for basal transcription of mitochondrial DNA, probably via its interaction with POLRMT and TFAM. Stimulates transcription independently of the methyltransferase activity. This Bos taurus (Bovine) protein is Mitochondrial dimethyladenosine transferase 1 (TFB1M).